The sequence spans 124 residues: Fluoride-specific ion channel FluC (124 aa).

Helical transmembrane passes span 5–25, 36–56, 70–90, and 100–120; these read LVVF…NLAA, TMII…WFAV, TGIL…FLLM, and LYVL…LAVI. Residues Gly-74 and Thr-77 each coordinate Na(+).

The protein belongs to the fluoride channel Fluc/FEX (TC 1.A.43) family.

It localises to the cell inner membrane. It carries out the reaction fluoride(in) = fluoride(out). Its activity is regulated as follows. Na(+) is not transported, but it plays an essential structural role and its presence is essential for fluoride channel function. Its function is as follows. Fluoride-specific ion channel. Important for reducing fluoride concentration in the cell, thus reducing its toxicity. The polypeptide is Fluoride-specific ion channel FluC (Methylobacterium nodulans (strain LMG 21967 / CNCM I-2342 / ORS 2060)).